The chain runs to 420 residues: Diphosphomevalonate decarboxylase 2 (420 aa).

25 to 28 (YWGK) serves as a coordination point for (R)-5-diphosphomevalonate. Positions 42 to 50 (SVTLDPDHL) match the Peroxisomal targeting signal PTS2 motif. (R)-5-diphosphomevalonate is bound by residues Arg-80, 163–168 (SGSACR), and Thr-219.

It belongs to the diphosphomevalonate decarboxylase family. In terms of assembly, homodimer.

Its subcellular location is the peroxisome. The enzyme catalyses (R)-5-diphosphomevalonate + ATP = isopentenyl diphosphate + ADP + phosphate + CO2. It participates in isoprenoid biosynthesis; isopentenyl diphosphate biosynthesis via mevalonate pathway; isopentenyl diphosphate from (R)-mevalonate: step 3/3. Performs the first committed step in the biosynthesis of isoprene-containing compounds such as sterols and terpenoids. Component of the triterpenes (e.g. ginsenosides or panaxosides) and phytosterols biosynthetic pathways. Promotes the accumulation of stigmasterol and beta-sitosterol. The sequence is that of Diphosphomevalonate decarboxylase 2 from Panax ginseng (Korean ginseng).